A 271-amino-acid chain; its full sequence is Protein PXR1 (271 aa).

The G-patch domain occupies 25-72 (TSRFGHQFLEKFGWKPGMGLGLYPMNSNTSHIKVSIKDDNVGLGAKLK). The tract at residues 147–239 (SNAKKRKREG…SASNIPDAVN (93 aa)) is disordered. Over residues 157 to 168 (DDSEDEDDDDKE) the composition is skewed to acidic residues. Positions 175-203 (KKHKKHKKHKKDKKKDKKDKKEHKKHKKE) are enriched in basic residues. Over residues 204–221 (EKRLKKEKRAEKTKETKK) the composition is skewed to basic and acidic residues. Position 230 is a phosphoserine (Ser230).

The protein belongs to the PINX1 family. As to quaternary structure, interacts with EST2.

It localises to the nucleus. The protein resides in the nucleolus. Involved in rRNA-processing at A0, A1 and A2 sites through its action in U18 and U24 snoRNA 3'-end final trimming. Negative regulator of telomerase throughX competition for binding to EST2 with TLC1. The polypeptide is Protein PXR1 (PXR1) (Saccharomyces cerevisiae (strain YJM789) (Baker's yeast)).